A 279-amino-acid polypeptide reads, in one-letter code: Oxygen-dependent coproporphyrinogen-III oxidase (279 aa).

Ser-102 provides a ligand contact to substrate. 2 residues coordinate a divalent metal cation: His-106 and His-116. His-116 serves as the catalytic Proton donor. 118–120 (NTR) is a substrate binding site. 2 residues coordinate a divalent metal cation: His-149 and His-179. The tract at residues 244–279 (YVEFNLLYDRGTKFGLMTDGNIEAILMSLPPVVKFN) is important for dimerization.

It belongs to the aerobic coproporphyrinogen-III oxidase family. In terms of assembly, homodimer. A divalent metal cation is required as a cofactor.

Its subcellular location is the cytoplasm. It catalyses the reaction coproporphyrinogen III + O2 + 2 H(+) = protoporphyrinogen IX + 2 CO2 + 2 H2O. Its pathway is porphyrin-containing compound metabolism; protoporphyrin-IX biosynthesis; protoporphyrinogen-IX from coproporphyrinogen-III (O2 route): step 1/1. Its function is as follows. Involved in the heme biosynthesis. Catalyzes the aerobic oxidative decarboxylation of propionate groups of rings A and B of coproporphyrinogen-III to yield the vinyl groups in protoporphyrinogen-IX. This chain is Oxygen-dependent coproporphyrinogen-III oxidase, found in Rickettsia typhi (strain ATCC VR-144 / Wilmington).